The chain runs to 304 residues: HTH-type transcriptional regulator AdmX (304 aa).

One can recognise an HTH lysR-type domain in the interval 1–58 (MKLRHLEIFYTVMTCGSLSRAAESLNISQPAASKSLKNAELKLGFKLFQRVRGKLLPS). The H-T-H motif DNA-binding region spans 18–37 (LSRAAESLNISQPAASKSLK).

It belongs to the LysR transcriptional regulatory family.

It is found in the cytoplasm. Its activity is regulated as follows. AdmX-mediated transcription is inhibited by indole-3-acetic and indole-3-pyruvic acids. AdmX recognizes and binds the auxin indole-3-acetic acid (IAA), which causes conformational changes in AdmX that result in the inhibition of the expression of the andrimid gene cluster and the suppression of antibiotic production. It also recognizes indole-3-pyruvic acid (IPA), an intermediate of the main IAA biosynthetic pathway in plants and plant beneficial bacteria, which also prevents andrimid synthesis, but to a much lesser extent. In terms of biological role, positively regulates the biosynthesis of andrimid, a broad-spectrum antibiotic, by activating the expression of the adm biosynthetic gene cluster. It specifically binds to a region within the adm promoter. This is HTH-type transcriptional regulator AdmX from Serratia plymuthica.